A 154-amino-acid chain; its full sequence is Holo-[acyl-carrier-protein] synthase (154 aa).

Mg(2+)-binding residues include D8 and E57.

Belongs to the P-Pant transferase superfamily. AcpS family. It depends on Mg(2+) as a cofactor.

It is found in the cytoplasm. It catalyses the reaction apo-[ACP] + CoA = holo-[ACP] + adenosine 3',5'-bisphosphate + H(+). Its function is as follows. Transfers the 4'-phosphopantetheine moiety from coenzyme A to a Ser of acyl-carrier-protein. This chain is Holo-[acyl-carrier-protein] synthase, found in Nitrosococcus oceani (strain ATCC 19707 / BCRC 17464 / JCM 30415 / NCIMB 11848 / C-107).